A 597-amino-acid polypeptide reads, in one-letter code: MRTDYCGLIDKKYLGQTVTVKGWAHRRRDHGGVIFIDLRDREGLVQVVIDPDTPEAFKLADSSRGEYVLSITGIVRERPAGTANSKMISGEIEILAKEIEILNAAATPPFQIDDENLSENVRLTNRVIDLRRPAMQKNLRLRYKVAMGVRNHLDKQGFIDIETPMLTRSTPEGARDYLVPSRVHPGEFFALPQSPQLFKQLLMVAGFDRYYQITKCFRDEDLRADRQPEFTQIDIETSFLNEDEIMDITEGMTKEIFQDVLGVTLPTFPRMTYGDAMFYYGSDKPDMRVALKFTELTDVMKSEEFKVFRGAADMANGRVVALRVPNGASFSRKEIDDYTQFVAIYGAKGLAYIKVNDVTKLNEEGLQSPIVKFLSANGLKEIIARTGAQNGDIIFFGADKAKVVNEAIGALRIKIGHEHGLENGYFVKEWRPLWVVDFPMFEHDEEEDRWTACHHPFTSPKPGHEDLMATDPGKCLARAYDMVLNGWEIGGGSIRIHRADIQEKVFGALKISPEEQQNKFGFLLDNLKFGAPPHGGLAFGLDRLVTLMCGAESIRDVIAFPKTQRAQCLLTNAPNAVDDKQLRELNLRLRQKAEPSA.

Glu-172 contacts L-aspartate. The aspartate stretch occupies residues 196-199 (QLFK). Arg-218 is a binding site for L-aspartate. Residues 218-220 (RDE) and Gln-227 contribute to the ATP site. His-454 lines the L-aspartate pocket. Glu-488 is a binding site for ATP. Position 495 (Arg-495) interacts with L-aspartate. 540–543 (GLDR) is a binding site for ATP.

Belongs to the class-II aminoacyl-tRNA synthetase family. Type 1 subfamily. In terms of assembly, homodimer.

Its subcellular location is the cytoplasm. The enzyme catalyses tRNA(Asx) + L-aspartate + ATP = L-aspartyl-tRNA(Asx) + AMP + diphosphate. In terms of biological role, aspartyl-tRNA synthetase with relaxed tRNA specificity since it is able to aspartylate not only its cognate tRNA(Asp) but also tRNA(Asn). Reaction proceeds in two steps: L-aspartate is first activated by ATP to form Asp-AMP and then transferred to the acceptor end of tRNA(Asp/Asn). The sequence is that of Aspartate--tRNA(Asp/Asn) ligase from Chromobacterium violaceum (strain ATCC 12472 / DSM 30191 / JCM 1249 / CCUG 213 / NBRC 12614 / NCIMB 9131 / NCTC 9757 / MK).